The primary structure comprises 807 residues: 85/88 kDa calcium-independent phospholipase A2 (807 aa).

Ser13 carries the post-translational modification Phosphoserine. ANK repeat units lie at residues 120-147, 151-181, 185-215, 219-248, 251-281, 286-312, 316-345, 349-378, and 382-403; these read WTVTHLAVELGIRECFHHSRIISCANST, EGCTPLHLACRKGDSEILVELVQYCHAQMDV, KGETAFHYAVQGDNPQVLQLLGKNASAGLNQ, QGLTPLHLACKMGKQEMVRVLLLCNARCNI, PGGFPIHTAMKFSQKGCAEMIISMDSNQIHS, YGASPLHWAKNAEMARMLLKRGCDVDS, SGNTALHVAVMRNRFDCVMVLLTYGANAGA, HGNTPLHLAMSKDNMEMVKALIVFGAEVDT, and FGETPALIASKISKLITRKALL. The next 2 membrane-spanning stretches (helical) occupy residues 481–501 and 512–532; these read LLCLDGGGVKGLVIIQLLIAI and LFDWVAGTSTGGILALAILHS. Residues 482–666 form the PNPLA domain; the sequence is LCLDGGGVKG…LANNPTLDAM (185 aa). The GXGXXG signature appears at 486 to 491; the sequence is GGGVKG. Positions 518–522 match the GXSXG motif; it reads GTSTG. Ser520 (nucleophile) is an active-site residue. Asp653 acts as the Proton acceptor in catalysis. A DGA/G motif is present at residues 653–655; sequence DGG. Residues 678-687 are calmodulin-binding (1-9-14 motif); sequence RKGQGNKVKK. Residues 749-760 form a calmodulin-binding (IQ motif) region; the sequence is AWCEMVGIQYFR.

As to quaternary structure, homodimer formed by catalytic domains tightly interacting through a large hydrophobic interface. The contact area involves 3 alpha helices, several loops and a part of the beta sheet from each monomer. Both active sites of the dimer are in close proximity adopting an open conformation that provide sufficient space for phospholipid access and favoring cooperativity in deacylation-reacylation reactions. Each monomer has 9 ankyrin repeats stacked side-by-side in an elongated structure oriented outwards from the catalytic core. In terms of tissue distribution, expressed in neurons of central and peripheral nervous system. Highly expressed in Purkinje cells in cerebellum and dorsal and ventral horn neurons in the spinal cord. Expressed in testis (at protein level). Expressed in skeletal muscle (at protein level).

It localises to the cytoplasm. The protein localises to the cell membrane. The protein resides in the mitochondrion. Its subcellular location is the cell projection. It is found in the pseudopodium. The enzyme catalyses a 1,2-diacyl-sn-glycero-3-phosphocholine + H2O = a 1-acyl-sn-glycero-3-phosphocholine + a fatty acid + H(+). The catalysed reaction is a 1-O-alkyl-2-acyl-sn-glycero-3-phosphocholine + H2O = a 1-O-alkyl-sn-glycero-3-phosphocholine + a fatty acid + H(+). It catalyses the reaction 1,2-dihexadecanoyl-sn-glycero-3-phosphocholine + H2O = 1-hexadecanoyl-sn-glycero-3-phosphocholine + hexadecanoate + H(+). It carries out the reaction 1-hexadecanoyl-2-(9Z-octadecenoyl)-sn-glycero-3-phosphocholine + H2O = 1-hexadecanoyl-sn-glycero-3-phosphocholine + (9Z)-octadecenoate + H(+). The enzyme catalyses 1-hexadecanoyl-2-(9Z,12Z-octadecadienoyl)-sn-glycero-3-phosphocholine + H2O = (9Z,12Z)-octadecadienoate + 1-hexadecanoyl-sn-glycero-3-phosphocholine + H(+). The catalysed reaction is 1-hexadecanoyl-2-(5Z,8Z,11Z,14Z-eicosatetraenoyl)-sn-glycero-3-phosphocholine + H2O = 1-hexadecanoyl-sn-glycero-3-phosphocholine + (5Z,8Z,11Z,14Z)-eicosatetraenoate + H(+). It catalyses the reaction 1-octadecanoyl-2-(5Z,8Z,11Z,14Z-eicosatetraenoyl)-sn-glycero-3-phosphocholine + H2O = 1-octadecanoyl-sn-glycero-3-phosphocholine + (5Z,8Z,11Z,14Z)-eicosatetraenoate + H(+). It carries out the reaction 1-hexadecanoyl-2-(5Z,8Z,11Z,14Z-eicosatetraenoyl)-sn-glycero-3-phosphoethanolamine + H2O = 1-hexadecanoyl-sn-glycero-3-phosphoethanolamine + (5Z,8Z,11Z,14Z)-eicosatetraenoate + H(+). The enzyme catalyses 1,2-dihexadecanoyl-sn-glycero-3-phosphate + H2O = 1-hexadecanoyl-sn-glycero-3-phosphate + hexadecanoate + H(+). The catalysed reaction is a 1-acyl-sn-glycero-3-phosphocholine + H2O = sn-glycerol 3-phosphocholine + a fatty acid + H(+). It catalyses the reaction 1-hexadecanoyl-sn-glycero-3-phosphocholine + H2O = sn-glycerol 3-phosphocholine + hexadecanoate + H(+). It carries out the reaction 1-(5Z,8Z,11Z,14Z-eicosatetraenoyl)-sn-glycero-3-phosphocholine + H2O = sn-glycerol 3-phosphocholine + (5Z,8Z,11Z,14Z)-eicosatetraenoate + H(+). The enzyme catalyses 2-(5Z,8Z,11Z,14Z)-eicosatetraenoyl-sn-glycero-3-phosphocholine + H2O = sn-glycerol 3-phosphocholine + (5Z,8Z,11Z,14Z)-eicosatetraenoate + H(+). The catalysed reaction is 1-O-hexadecyl-2-(5Z,8Z,11Z,14Z)-eicosatetraenoyl-sn-glycero-3-phosphocholine + H2O = 1-O-hexadecyl-sn-glycero-3-phosphocholine + (5Z,8Z,11Z,14Z)-eicosatetraenoate + H(+). It catalyses the reaction 1-O-hexadecyl-2-acetyl-sn-glycero-3-phosphocholine + H2O = 1-O-hexadecyl-sn-glycero-3-phosphocholine + acetate + H(+). It carries out the reaction hexadecanoyl-CoA + H2O = hexadecanoate + CoA + H(+). The enzyme catalyses 1',3'-bis[1,2-di-(9Z-octadecenoyl)-sn-glycero-3-phospho]-glycerol + H2O = 1'-[1,2-di-(9Z-octadecenoyl)-sn-glycero-3-phospho]-3'-[1-(9Z-octadecenoyl)-sn-glycero-3-phospho]-glycerol + (9Z)-octadecenoate + H(+). The catalysed reaction is 1'-[1,2-di-(9Z-octadecenoyl)-sn-glycero-3-phospho]-3'-[1-(9Z-octadecenoyl)-sn-glycero-3-phospho]-glycerol + H2O = 1',3'-bis-[1-(9Z-octadecenoyl)-sn-glycero-3-phospho]-glycerol + (9Z)-octadecenoate + H(+). It catalyses the reaction 1',3'-bis-[1,2-di-(9Z,12Z-octadecadienoyl)-sn-glycero-3-phospho]-glycerol + H2O = 1'-[1,2-di-(9Z,12Z-octadecadienoyl)-sn-glycero-3-phospho]-3'-[1-(9Z,12Z-octadecadienoyl)-sn-glycero-3-phospho]-glycerol + (9Z,12Z)-octadecadienoate + H(+). It carries out the reaction 1-octadecanoyl-2-(15-hydroxy-(5Z,8Z,11Z,13E)-eicosatetraenoyl)-sn-glycero-3-phosphoethanolamine + H2O = 1-octadecanoyl-sn-glycero-3-phosphoethanolamine + 15-hydroxy-(5Z,8Z,11Z,13E)-eicosatetraenoate + H(+). With respect to regulation, inhibited by calcium-activated calmodulin. Activated by ATP. Inhibited by bromoenol lactone (BEL). In terms of biological role, calcium-independent phospholipase involved in phospholipid remodeling with implications in cellular membrane homeostasis, mitochondrial integrity and signal transduction. Hydrolyzes the ester bond of the fatty acyl group attached at sn-1 or sn-2 position of phospholipids (phospholipase A1 and A2 activity respectively), producing lysophospholipids that are used in deacylation-reacylation cycles. Hydrolyzes both saturated and unsaturated long fatty acyl chains in various glycerophospholipid classes such as phosphatidylcholines, phosphatidylethanolamines and phosphatidates, with a preference for hydrolysis at sn-2 position. Can further hydrolyze lysophospholipids carrying saturated fatty acyl chains (lysophospholipase activity). Upon oxidative stress, contributes to remodeling of mitochondrial phospholipids in pancreatic beta cells, in a repair mechanism to reduce oxidized lipid content. Preferentially hydrolyzes oxidized polyunsaturated fatty acyl chains from cardiolipins, yielding monolysocardiolipins that can be reacylated with unoxidized fatty acyls to regenerate native cardiolipin species. Hydrolyzes oxidized glycerophosphoethanolamines present in pancreatic islets, releasing oxidized polyunsaturated fatty acids such as hydroxyeicosatetraenoates (HETEs). Has thioesterase activity toward fatty-acyl CoA releasing CoA-SH known to facilitate fatty acid transport and beta-oxidation in mitochondria particularly in skeletal muscle. Plays a role in regulation of membrane dynamics and homeostasis. Selectively hydrolyzes sn-2 arachidonoyl group in plasmalogen phospholipids, structural components of lipid rafts and myelin. Regulates F-actin polymerization at the pseudopods, which is required for both speed and directionality of MCP1/CCL2-induced monocyte chemotaxis. Targets membrane phospholipids to produce potent lipid signaling messengers. Generates lysophosphatidate (LPA, 1-acyl-glycerol-3-phosphate), which acts via G-protein receptors in various cell types. Has phospholipase A2 activity toward platelet-activating factor (PAF, 1-O-alkyl-2-acetyl-sn-glycero-3-phosphocholine), likely playing a role in inactivation of this potent pro-inflammatory signaling lipid. In response to glucose, amplifies calcium influx in pancreatic beta cells to promote INS secretion. In Mus musculus (Mouse), this protein is 85/88 kDa calcium-independent phospholipase A2 (Pla2g6).